The sequence spans 444 residues: Phosphoglucosamine mutase (444 aa).

The Phosphoserine intermediate role is filled by Ser104. The Mg(2+) site is built by Ser104, Asp243, Asp245, and Asp247. Ser104 is subject to Phosphoserine.

This sequence belongs to the phosphohexose mutase family. The cofactor is Mg(2+). In terms of processing, activated by phosphorylation.

The catalysed reaction is alpha-D-glucosamine 1-phosphate = D-glucosamine 6-phosphate. Catalyzes the conversion of glucosamine-6-phosphate to glucosamine-1-phosphate. In Neisseria meningitidis serogroup C / serotype 2a (strain ATCC 700532 / DSM 15464 / FAM18), this protein is Phosphoglucosamine mutase.